A 534-amino-acid chain; its full sequence is Beta-1,2-xylosyltransferase (534 aa).

The Cytoplasmic portion of the chain corresponds to 1–11; the sequence is MSKRNPKILKI. The helical; Signal-anchor for type II membrane protein transmembrane segment at 12-34 threads the bilayer; sequence FLYMLLLNSLFLIIYFVFHSSSF. Over 35–534 the chain is Lumenal; it reads SPEQSQPPHI…LTEIMKSLGC (500 aa). 3 N-linked (GlcNAc...) asparagine glycosylation sites follow: asparagine 51, asparagine 301, and asparagine 479.

Post-translationally, glycosylation at least at one of the two sites Asn-51 and Asn-301 is necessary for enzyme stability and activity.

The protein localises to the golgi apparatus membrane. The catalysed reaction is N(4)-{beta-D-GlcNAc-(1-&gt;2)-alpha-D-Man-(1-&gt;3)-[beta-D-GlcNAc-(1-&gt;2)-alpha-D-Man-(1-&gt;6)]-beta-D-Man-(1-&gt;4)-beta-D-GlcNAc-(1-&gt;4)-beta-D-GlcNAc}-L-asparaginyl-[protein] + UDP-alpha-D-xylose = N(4)-{beta-D-GlcNAc-(1-&gt;2)-alpha-D-Man-(1-&gt;3)-[beta-D-GlcNAc-(1-&gt;2)-alpha-D-Man-(1-&gt;6)]-[beta-D-Xyl-(1-&gt;2)]-beta-D-Man-(1-&gt;4)-beta-D-GlcNAc-(1-&gt;4)-beta-D-GlcNAc}-L-asparaginyl-[protein] + UDP + H(+). It participates in protein modification; protein glycosylation. In terms of biological role, glycosyltransferase involved in the xylosylation of N-glycans. Possesses beta-1,2-xylosyltransferase activity, transferring xylose from UDP-xylose to the core beta-linked mannose of N-glycans. Involved in the biosynthesis of glycoprotein bound N-glycans. Does not require metal ions for its activity. The sequence is that of Beta-1,2-xylosyltransferase from Arabidopsis thaliana (Mouse-ear cress).